Here is a 248-residue protein sequence, read N- to C-terminus: 3-deoxy-manno-octulosonate cytidylyltransferase (248 aa).

This sequence belongs to the KdsB family.

Its subcellular location is the cytoplasm. The enzyme catalyses 3-deoxy-alpha-D-manno-oct-2-ulosonate + CTP = CMP-3-deoxy-beta-D-manno-octulosonate + diphosphate. The protein operates within nucleotide-sugar biosynthesis; CMP-3-deoxy-D-manno-octulosonate biosynthesis; CMP-3-deoxy-D-manno-octulosonate from 3-deoxy-D-manno-octulosonate and CTP: step 1/1. It participates in bacterial outer membrane biogenesis; lipopolysaccharide biosynthesis. In terms of biological role, activates KDO (a required 8-carbon sugar) for incorporation into bacterial lipopolysaccharide in Gram-negative bacteria. This Chlorobaculum parvum (strain DSM 263 / NCIMB 8327) (Chlorobium vibrioforme subsp. thiosulfatophilum) protein is 3-deoxy-manno-octulosonate cytidylyltransferase.